The chain runs to 307 residues: Alpha N-terminal protein methyltransferase 1 (307 aa).

Positions 38–54 are enriched in low complexity; it reads EPAPAPAAGSNGVAGEQ. The segment at 38–60 is disordered; that stretch reads EPAPAPAAGSNGVAGEQEAGGGG. S-adenosyl-L-methionine contacts are provided by residues Gly123, Arg128, 145–147, 179–180, and Gln195; these read EPV and LQ.

This sequence belongs to the methyltransferase superfamily. NTM1 family.

The catalysed reaction is N-terminal L-alanyl-L-prolyl-L-lysyl-[protein] + 3 S-adenosyl-L-methionine = N-terminal N,N,N-trimethyl-L-alanyl-L-prolyl-L-lysyl-[protein] + 3 S-adenosyl-L-homocysteine + 3 H(+). It catalyses the reaction N-terminal L-seryl-L-prolyl-L-lysyl-[protein] + 3 S-adenosyl-L-methionine = N-terminal N,N,N-trimethyl-L-seryl-L-prolyl-L-lysyl-[protein] + 3 S-adenosyl-L-homocysteine + 3 H(+). It carries out the reaction N-terminal L-prolyl-L-prolyl-L-lysyl-[protein] + 2 S-adenosyl-L-methionine = N-terminal N,N-dimethyl-L-prolyl-L-prolyl-L-lysyl-[protein] + 2 S-adenosyl-L-homocysteine + 2 H(+). Functionally, alpha-N-methyltransferase that methylates the N-terminus of target proteins containing the N-terminal motif [Ala/Pro/Ser]-Pro-Lys when the initiator Met is cleaved. Specifically catalyzes mono-, di- or tri-methylation of exposed alpha-amino group of Ala or Ser residue in the [Ala/Ser]-Pro-Lys motif and mono- or di-methylation of Pro in the Pro-Pro-Lys motif. This is Alpha N-terminal protein methyltransferase 1 from Oryza sativa subsp. indica (Rice).